We begin with the raw amino-acid sequence, 908 residues long: Glutamate receptor ionotropic, kainate 2 (908 aa).

The first 31 residues, 1–31 (MQRIAGITKMVTHRRWLGLLLLLLCVGYSHG), serve as a signal peptide directing secretion. Over 32–561 (MPHVLRFGGI…VFSFLNPLSP (530 aa)) the chain is Extracellular. N-linked (GlcNAc...) asparagine glycosylation is found at Asn-67, Asn-73, Asn-275, Asn-378, Asn-412, Asn-423, and Asn-430. Cys-96 and Cys-347 are oxidised to a cystine. Residues Pro-516, Ala-518, and Arg-523 each contribute to the L-glutamate site. N-linked (GlcNAc...) asparagine glycosylation occurs at Asn-546. Residues 562-582 (DIWMYILLAYLGVSCVLFVIA) traverse the membrane as a helical segment. Residues 583 to 638 (RFSPYEWYNPHPCNPDSDVVENNFTLLNSFWFGVGALMQQGSELMPKALSTRIVGG) lie on the Cytoplasmic side of the membrane. The helical transmembrane segment at 639–659 (IWWFFTLIIISSYTANLAAFL) threads the bilayer. Residues 660–819 (TVERMESPID…KEASALGVQN (160 aa)) are Extracellular-facing. Residues Ser-689, Thr-690, and Glu-738 each contribute to the L-glutamate site. An intrachain disulfide couples Cys-750 to Cys-804. Asn-751 carries an N-linked (GlcNAc...) asparagine glycan. A helical transmembrane segment spans residues 820–840 (IGGIFIVLAAGLVLSVFVAVG). The Cytoplasmic portion of the chain corresponds to 841-908 (EFLYKSKQNA…RRLPGKETMA (68 aa)).

This sequence belongs to the glutamate-gated ion channel (TC 1.A.10.1) family. GRIK2 subfamily. In terms of assembly, homotetramer and heterotetramer with GRIK5. Tetramers may be formed by the dimerization of dimers.

It localises to the cell membrane. Its subcellular location is the postsynaptic cell membrane. It catalyses the reaction Ca(2+)(in) = Ca(2+)(out). The catalysed reaction is Na(+)(in) = Na(+)(out). With respect to regulation, cold receptor activity activated by temperatures between 10-19 degrees Celsius. Ionotropic glutamate receptor that functions as a cation-permeable ligand-gated ion channel, gated by L-glutamate and the glutamatergic agonist kainic acid. L-glutamate acts as an excitatory neurotransmitter at many synapses in the central nervous system. Binding of the excitatory neurotransmitter L-glutamate induces a conformation change, leading to the opening of the cation channel, and thereby converts the chemical signal to an electrical impulse. The receptor then desensitizes rapidly and enters a transient inactive state, characterized by the presence of bound agonist. In terms of biological role, independent of its ionotropic glutamate receptor activity, acts as a thermoreceptor conferring sensitivity to cold temperatures. Functions in dorsal root ganglion neurons. This chain is Glutamate receptor ionotropic, kainate 2, found in Danio rerio (Zebrafish).